A 339-amino-acid polypeptide reads, in one-letter code: Phenylalanine--tRNA ligase alpha subunit (339 aa).

E254 provides a ligand contact to Mg(2+).

This sequence belongs to the class-II aminoacyl-tRNA synthetase family. Phe-tRNA synthetase alpha subunit type 1 subfamily. In terms of assembly, tetramer of two alpha and two beta subunits. Mg(2+) serves as cofactor.

It is found in the cytoplasm. It catalyses the reaction tRNA(Phe) + L-phenylalanine + ATP = L-phenylalanyl-tRNA(Phe) + AMP + diphosphate + H(+). In Clostridium kluyveri (strain ATCC 8527 / DSM 555 / NBRC 12016 / NCIMB 10680 / K1), this protein is Phenylalanine--tRNA ligase alpha subunit.